The chain runs to 248 residues: Probable transcriptional regulatory protein Msil_2305 (248 aa).

This sequence belongs to the TACO1 family.

The protein localises to the cytoplasm. This Methylocella silvestris (strain DSM 15510 / CIP 108128 / LMG 27833 / NCIMB 13906 / BL2) protein is Probable transcriptional regulatory protein Msil_2305.